The primary structure comprises 307 residues: Elongation factor Ts (307 aa).

Positions 80-83 (TDFV) are involved in Mg(2+) ion dislocation from EF-Tu.

Belongs to the EF-Ts family.

It is found in the cytoplasm. In terms of biological role, associates with the EF-Tu.GDP complex and induces the exchange of GDP to GTP. It remains bound to the aminoacyl-tRNA.EF-Tu.GTP complex up to the GTP hydrolysis stage on the ribosome. The polypeptide is Elongation factor Ts (Methylobacterium nodulans (strain LMG 21967 / CNCM I-2342 / ORS 2060)).